The following is a 356-amino-acid chain: Phospho-2-dehydro-3-deoxyheptonate aldolase, Tyr-sensitive (356 aa).

This sequence belongs to the class-I DAHP synthase family.

It catalyses the reaction D-erythrose 4-phosphate + phosphoenolpyruvate + H2O = 7-phospho-2-dehydro-3-deoxy-D-arabino-heptonate + phosphate. It participates in metabolic intermediate biosynthesis; chorismate biosynthesis; chorismate from D-erythrose 4-phosphate and phosphoenolpyruvate: step 1/7. Its function is as follows. Stereospecific condensation of phosphoenolpyruvate (PEP) and D-erythrose-4-phosphate (E4P) giving rise to 3-deoxy-D-arabino-heptulosonate-7-phosphate (DAHP). The protein is Phospho-2-dehydro-3-deoxyheptonate aldolase, Tyr-sensitive (aroF) of Salmonella typhi.